A 1167-amino-acid chain; its full sequence is Kinesin-like protein KIN-14M (1167 aa).

Positions 93–130 (PRKENDPGTQNSEGRRKIPKNPAMSEPSSPLSQTTLSS) are disordered. A compositionally biased stretch (low complexity) spans 117 to 130 (SEPSSPLSQTTLSS). Coiled-coil stretches lie at residues 271–333 (VHQM…KEEM), 366–398 (AKYR…AMKS), and 432–489 (KQEL…ESRS). Residues 572-900 (NIRVHCRIRP…LKFADRVSGV (329 aa)) enclose the Kinesin motor domain. Residue 656-663 (GQTGSGKT) coordinates ATP. Residues 907–944 (ANKEGKDIKEFKEQLSLLKDKIAKKDEEISRLQLQSHN) are a coiled coil. Disordered regions lie at residues 955 to 974 (SLLK…SKIQ) and 1083 to 1167 (PDQD…KRWT). The span at 958-972 (KHSSSSPGISSLGSK) shows a compositional bias: low complexity. Composition is skewed to polar residues over residues 1113-1124 (ASRTTTPKTPQS) and 1151-1167 (TQAT…KRWT).

It belongs to the TRAFAC class myosin-kinesin ATPase superfamily. Kinesin family. KIN-14 subfamily.

This is Kinesin-like protein KIN-14M from Oryza sativa subsp. japonica (Rice).